Consider the following 371-residue polypeptide: Germination protease (371 aa).

A propeptide spanning residues 1-16 (MEKQKLDLSAYQIRTD) is cleaved from the precursor.

This sequence belongs to the peptidase A25 family. As to quaternary structure, homotetramer. Post-translationally, autoproteolytically processed. The inactive tetrameric zymogen termed p46 autoprocesses to a smaller form termed p41, which is active only during spore germination.

The enzyme catalyses Endopeptidase action with P4 Glu or Asp, P1 preferably Glu &gt; Asp, P1' hydrophobic and P2' Ala.. Functionally, initiates the rapid degradation of small, acid-soluble proteins during spore germination. This is Germination protease from Bacillus pumilus (strain SAFR-032).